The following is a 111-amino-acid chain: Phosphoribosyl-ATP pyrophosphatase (111 aa).

It belongs to the PRA-PH family.

Its subcellular location is the cytoplasm. It catalyses the reaction 1-(5-phospho-beta-D-ribosyl)-ATP + H2O = 1-(5-phospho-beta-D-ribosyl)-5'-AMP + diphosphate + H(+). It functions in the pathway amino-acid biosynthesis; L-histidine biosynthesis; L-histidine from 5-phospho-alpha-D-ribose 1-diphosphate: step 2/9. In Azotobacter vinelandii (strain DJ / ATCC BAA-1303), this protein is Phosphoribosyl-ATP pyrophosphatase.